The following is a 217-amino-acid chain: Probable GTP-binding protein EngB (217 aa).

In terms of domain architecture, EngB-type G spans glutamate 27–glutamate 201. GTP-binding positions include glycine 35–serine 42, glycine 62–leucine 66, aspartate 80–glycine 83, threonine 147–aspartate 150, and phenylalanine 180–serine 182. 2 residues coordinate Mg(2+): serine 42 and threonine 64.

The protein belongs to the TRAFAC class TrmE-Era-EngA-EngB-Septin-like GTPase superfamily. EngB GTPase family. It depends on Mg(2+) as a cofactor.

Its function is as follows. Necessary for normal cell division and for the maintenance of normal septation. The polypeptide is Probable GTP-binding protein EngB (Yersinia enterocolitica serotype O:8 / biotype 1B (strain NCTC 13174 / 8081)).